A 73-amino-acid polypeptide reads, in one-letter code: Large ribosomal subunit protein bL31 (73 aa).

Positions 16, 18, 38, and 41 each coordinate Zn(2+).

The protein belongs to the bacterial ribosomal protein bL31 family. Type A subfamily. Part of the 50S ribosomal subunit. Requires Zn(2+) as cofactor.

In terms of biological role, binds the 23S rRNA. This is Large ribosomal subunit protein bL31 from Streptomyces avermitilis (strain ATCC 31267 / DSM 46492 / JCM 5070 / NBRC 14893 / NCIMB 12804 / NRRL 8165 / MA-4680).